The chain runs to 217 residues: Redox-sensing transcriptional repressor Rex (217 aa).

The segment at residues 18 to 57 (LYYRFLKNLHASGKQRVSSAELSDAVKVDSATIRRDFSYF) is a DNA-binding region (H-T-H motif). 92–97 (GVGNLG) lines the NAD(+) pocket.

It belongs to the transcriptional regulatory Rex family. As to quaternary structure, homodimer.

It localises to the cytoplasm. Its function is as follows. Modulates transcription in response to changes in cellular NADH/NAD(+) redox state. This is Redox-sensing transcriptional repressor Rex from Bacillus pumilus (strain SAFR-032).